The sequence spans 285 residues: RNA polymerase sigma factor RpoH (285 aa).

The segment at 53–122 (LILSHLRFVI…IHEYVLRNWR (70 aa)) is sigma-70 factor domain-2. Residues 77-80 (DLIQ) carry the Interaction with polymerase core subunit RpoC motif. Positions 229–281 (ALLRLDERSRNIIRARWLDKKEKNTLQKIANNYGISAERVRQLEKNAMKKLKI) are sigma-70 factor domain-4. Residues 254–273 (LQKIANNYGISAERVRQLEK) constitute a DNA-binding region (H-T-H motif).

This sequence belongs to the sigma-70 factor family. RpoH subfamily. Interacts with the RNA polymerase core enzyme.

It is found in the cytoplasm. Functionally, sigma factors are initiation factors that promote the attachment of RNA polymerase to specific initiation sites and are then released. This sigma factor is involved in regulation of expression of heat shock genes. In Buchnera aphidicola subsp. Schizaphis graminum (strain Sg), this protein is RNA polymerase sigma factor RpoH.